We begin with the raw amino-acid sequence, 275 residues long: Methylglyoxal reductase DkgA (275 aa).

Residue Tyr51 is the Proton donor of the active site. Position 107 (His107) interacts with substrate. NADP(+) is bound at residue 187–241; the sequence is SPLAQGGKGVFDQKVIRDLADKYGKTPAQIVIRWHLDSGLVVIPKSVTPSRIAEN.

Belongs to the aldo/keto reductase family. In terms of assembly, monomer.

It localises to the cytoplasm. It carries out the reaction hydroxyacetone + NADP(+) = methylglyoxal + NADPH + H(+). The catalysed reaction is a primary alcohol + NADP(+) = an aldehyde + NADPH + H(+). It catalyses the reaction 2-dehydro-L-idonate + NADP(+) = 2,5-didehydro-D-gluconate + NADPH + H(+). Functionally, aldo-keto reductase that significantly contributes to cellular methylglyoxal detoxification by catalyzing the NADPH-dependent conversion of methylglyoxal to acetol. It also exhibits fairly high activity with glyoxal. Shows broad specificity and can use aromatic aldehydes such as 4-nitrobenzaldehyde, 3-nitrobenzaldehyde and benzaldehyde, and phenylglyoxal. Shows beta-keto ester reductase activity toward ethyl acetoacetate and a variety of 2-substituted derivatives. Also catalyzes the reduction of 2,5-diketo-D-gluconic acid (25DKG) to 2-keto-L-gulonic acid (2KLG) and could be involved in ketogluconate metabolism. However, the specific activity of the enzyme toward 2,5-diketo-D-gluconate was reported to be almost 400-fold lower than its activity toward methylglyoxal. Can catalyze in vitro the NADPH-dependent reduction of furfural, a natural product of lignocellulosic decomposition, to the less toxic product, furfuryl alcohol. However, it is unlikely that furfural is a physiological substrate. This chain is Methylglyoxal reductase DkgA, found in Escherichia coli (strain K12).